Here is a 631-residue protein sequence, read N- to C-terminus: Clathrin interactor 1 (631 aa).

In terms of domain architecture, ENTH spans 24–157 (NVVMNYSEIE…QDDDRLREER (134 aa)). Position 37 (Arg-37) interacts with a 1,2-diacyl-sn-glycero-3-phospho-(1D-myo-inositol-4,5-bisphosphate). The segment at 60–62 (FMY) is interaction with VTI1B. Arg-75 contacts a 1,2-diacyl-sn-glycero-3-phospho-(1D-myo-inositol-4,5-bisphosphate). 2 interaction with VTI1B regions span residues 102-104 (SER) and 150-161 (DDRLREERKKAK). Residues Ser-171, Ser-174, Ser-213, Ser-218, Ser-235, Ser-253, and Ser-307 each carry the phosphoserine modification. Residues 227–339 (FRRKDREDSP…SSGDLVDLFD (113 aa)) are disordered. Basic and acidic residues predominate over residues 230-247 (KDREDSPERCSDSDEEKK). Residues 308-318 (PDQNASTHTPQ) are compositionally biased toward polar residues. Phosphothreonine is present on Thr-316. The span at 319 to 331 (SSAKPSVPSSKSS) shows a compositional bias: low complexity. Residues Ser-320 and Ser-630 each carry the phosphoserine modification.

It belongs to the epsin family. In terms of assembly, binds clathrin heavy chain and AP-2. Interacts with VTI1B. Interacts with GGA2 (via GAE domain). Interacts with AP1G1 (via GAE domain). Interacts with AP1G2 (via GAE domain).

Its subcellular location is the cytoplasm. The protein localises to the perinuclear region. The protein resides in the membrane. It localises to the cytoplasmic vesicle. It is found in the clathrin-coated vesicle. In terms of biological role, binds to membranes enriched in phosphatidylinositol 4,5-bisphosphate (PtdIns(4,5)P2). May have a role in transport via clathrin-coated vesicles from the trans-Golgi network to endosomes. Stimulates clathrin assembly. The chain is Clathrin interactor 1 (Clint1) from Mus musculus (Mouse).